A 144-amino-acid chain; its full sequence is Large ribosomal subunit protein uL15 (144 aa).

The disordered stretch occupies residues 1–57 (MELNNLKPAEGSKHAKRRVGRGIGSGLGKTAGRGHKGQKSRSGGFHKVGFEGGQMPL). A compositionally biased stretch (gly residues) spans 21–31 (RGIGSGLGKTA).

The protein belongs to the universal ribosomal protein uL15 family. Part of the 50S ribosomal subunit.

Its function is as follows. Binds to the 23S rRNA. This is Large ribosomal subunit protein uL15 from Paraburkholderia phytofirmans (strain DSM 17436 / LMG 22146 / PsJN) (Burkholderia phytofirmans).